The sequence spans 274 residues: Acetyl-coenzyme A carboxylase carboxyl transferase subunit alpha (274 aa).

One can recognise a CoA carboxyltransferase C-terminal domain in the interval 2–250 (NKEFIKSIVV…KKEIMNAMNE (249 aa)).

Belongs to the AccA family. Acetyl-CoA carboxylase is a heterohexamer composed of biotin carboxyl carrier protein (AccB), biotin carboxylase (AccC) and two subunits each of ACCase subunit alpha (AccA) and ACCase subunit beta (AccD).

Its subcellular location is the cytoplasm. The catalysed reaction is N(6)-carboxybiotinyl-L-lysyl-[protein] + acetyl-CoA = N(6)-biotinyl-L-lysyl-[protein] + malonyl-CoA. The protein operates within lipid metabolism; malonyl-CoA biosynthesis; malonyl-CoA from acetyl-CoA: step 1/1. Component of the acetyl coenzyme A carboxylase (ACC) complex. First, biotin carboxylase catalyzes the carboxylation of biotin on its carrier protein (BCCP) and then the CO(2) group is transferred by the carboxyltransferase to acetyl-CoA to form malonyl-CoA. This Clostridium botulinum (strain Alaska E43 / Type E3) protein is Acetyl-coenzyme A carboxylase carboxyl transferase subunit alpha.